Reading from the N-terminus, the 156-residue chain is Eosinophil cationic-type ribonuclease 3 (156 aa).

The signal sequence occupies residues 1–25; the sequence is MGPKLLESRLCLLLLLRLVLMLASC. Histidine 38 acts as the Proton acceptor in catalysis. N-linked (GlcNAc...) asparagine glycosylation occurs at asparagine 41. Cystine bridges form between cysteine 47–cysteine 106, cysteine 61–cysteine 119, cysteine 79–cysteine 134, and cysteine 86–cysteine 94. Substrate is bound at residue 62–66; sequence KGLNT. Asparagine 89, asparagine 96, and asparagine 107 each carry an N-linked (GlcNAc...) asparagine glycan. Catalysis depends on histidine 151, which acts as the Proton donor.

The protein belongs to the pancreatic ribonuclease family.

This Mus musculus (Mouse) protein is Eosinophil cationic-type ribonuclease 3 (Ear3).